A 294-amino-acid chain; its full sequence is UDP-3-O-acyl-N-acetylglucosamine deacetylase (294 aa).

Zn(2+) contacts are provided by histidine 75, histidine 232, and aspartate 236. Catalysis depends on histidine 259, which acts as the Proton donor.

It belongs to the LpxC family. Zn(2+) serves as cofactor.

The catalysed reaction is a UDP-3-O-[(3R)-3-hydroxyacyl]-N-acetyl-alpha-D-glucosamine + H2O = a UDP-3-O-[(3R)-3-hydroxyacyl]-alpha-D-glucosamine + acetate. It functions in the pathway glycolipid biosynthesis; lipid IV(A) biosynthesis; lipid IV(A) from (3R)-3-hydroxytetradecanoyl-[acyl-carrier-protein] and UDP-N-acetyl-alpha-D-glucosamine: step 2/6. Catalyzes the hydrolysis of UDP-3-O-myristoyl-N-acetylglucosamine to form UDP-3-O-myristoylglucosamine and acetate, the committed step in lipid A biosynthesis. This is UDP-3-O-acyl-N-acetylglucosamine deacetylase from Campylobacter lari (strain RM2100 / D67 / ATCC BAA-1060).